The chain runs to 755 residues: von Willebrand factor A domain-containing protein 2 (755 aa).

The N-terminal stretch at 1–23 is a signal peptide; that stretch reads MPPFLLLEAVCVFLFSRVPPSLP. A VWFA 1 domain is found at 51–222; the sequence is DIMFLLDGSN…DATNGLFSTL (172 aa). N147 carries N-linked (GlcNAc...) asparagine glycosylation. The EGF-like 1 domain maps to 296–333; the sequence is PGPCDSQPCQNGGTCVPEGLDGYQCLCPLAFGGEANCA. 3 disulfide bridges follow: C299-C310, C304-C320, and C322-C332. VWFA domains are found at residues 343–517 and 531–705; these read DLLF…QGKL and DLVF…IEWL. The EGF-like 2 domain occupies 712–748; the sequence is PVNLCKPSPCMNEGSCVLQNGSYRCKCRDGWEGPHCE. 3 disulfides stabilise this stretch: C716/C727, C721/C736, and C738/C747.

In terms of assembly, forms monomers and multimers. In terms of processing, a 55 kDa form is produced by proteolytic cleavage. Expression is generally absent in normal colon and other normal body tissues, but it is induced an average of 78-fold in Stage II, III, and IV colon cancers, as well as in colon adenomas and colon cancer cell lines.

It is found in the secreted. In Homo sapiens (Human), this protein is von Willebrand factor A domain-containing protein 2 (VWA2).